Reading from the N-terminus, the 524-residue chain is Ribonuclease Y (524 aa).

A helical membrane pass occupies residues 3–23; sequence IVINLFLLVPASIVFFAAGFF. Positions 96–127 are disordered; sequence QQREGQLKKQAQDNRDMERRLQDQRKENEQVQ. Residues 100 to 124 are compositionally biased toward basic and acidic residues; sequence GQLKKQAQDNRDMERRLQDQRKENE. The region spanning 214 to 280 is the KH domain; that stretch reads ALSVVHIQTD…KLTLQKLLSE (67 aa). Positions 340–432 constitute an HD domain; it reads LLQHSREVAM…VDAANVISLS (93 aa).

Belongs to the RNase Y family.

It localises to the cell membrane. Its function is as follows. Endoribonuclease that initiates mRNA decay. The polypeptide is Ribonuclease Y (Chlorobium phaeovibrioides (strain DSM 265 / 1930) (Prosthecochloris vibrioformis (strain DSM 265))).